Here is a 474-residue protein sequence, read N- to C-terminus: Bifunctional protein HldE (474 aa).

The tract at residues Met-1 to Glu-318 is ribokinase. Asn-194–Glu-197 is a binding site for ATP. Asp-263 is a catalytic residue. Positions Phe-343 to Gly-474 are cytidylyltransferase.

In the N-terminal section; belongs to the carbohydrate kinase PfkB family. It in the C-terminal section; belongs to the cytidylyltransferase family. Homodimer.

The enzyme catalyses D-glycero-beta-D-manno-heptose 7-phosphate + ATP = D-glycero-beta-D-manno-heptose 1,7-bisphosphate + ADP + H(+). The catalysed reaction is D-glycero-beta-D-manno-heptose 1-phosphate + ATP + H(+) = ADP-D-glycero-beta-D-manno-heptose + diphosphate. Its pathway is nucleotide-sugar biosynthesis; ADP-L-glycero-beta-D-manno-heptose biosynthesis; ADP-L-glycero-beta-D-manno-heptose from D-glycero-beta-D-manno-heptose 7-phosphate: step 1/4. It functions in the pathway nucleotide-sugar biosynthesis; ADP-L-glycero-beta-D-manno-heptose biosynthesis; ADP-L-glycero-beta-D-manno-heptose from D-glycero-beta-D-manno-heptose 7-phosphate: step 3/4. In terms of biological role, catalyzes the phosphorylation of D-glycero-D-manno-heptose 7-phosphate at the C-1 position to selectively form D-glycero-beta-D-manno-heptose-1,7-bisphosphate. Functionally, catalyzes the ADP transfer from ATP to D-glycero-beta-D-manno-heptose 1-phosphate, yielding ADP-D-glycero-beta-D-manno-heptose. The chain is Bifunctional protein HldE from Pseudomonas syringae pv. tomato (strain ATCC BAA-871 / DC3000).